The sequence spans 458 residues: Ammonium transporter Rh type B (458 aa).

Over 1-13 (MAGSPSRAAGRRL) the chain is Cytoplasmic. Residues 14-34 (QLPLLCLFLQGATAVLFAVFV) form a helical membrane-spanning segment. Residues 35 to 61 (RYNHKTDAALWHRGNHSNADNEFYFRY) lie on the Extracellular side of the membrane. Asn49 carries an N-linked (GlcNAc...) asparagine glycan. A helical membrane pass occupies residues 62–82 (PSFQDVHAMVFVGFGFLMVFL). Residues 83 to 86 (QRYG) lie on the Cytoplasmic side of the membrane. Residues 87-107 (FSSVGFTFLLAAFALQWSTLV) form a helical membrane-spanning segment. The Extracellular portion of the chain corresponds to 108–124 (QGFLHSFHSGHIHVGVE). Residues 125-145 (SMINADFCAGAVLISFGAVLG) traverse the membrane as a helical segment. At 146 to 149 (KTGP) the chain is on the cytoplasmic side. The chain crosses the membrane as a helical span at residues 150 to 170 (AQLLLMALLEVVLFGINEFVL). The Extracellular segment spans residues 171-178 (LHLLGVRD). Residues 179 to 201 (AGGSMTIHTFGAYFGLVLSRVLY) form a helical membrane-spanning segment. Residues 202-219 (RPQLEKSKHRQGSVYHSD) are Cytoplasmic-facing. Residues 220-240 (LFAMIGTIFLWIFWPSFNSAL) traverse the membrane as a helical segment. The Extracellular segment spans residues 241 to 251 (TALGAGQHRTA). The chain crosses the membrane as a helical span at residues 252 to 272 (LNTYYSLAASTLGTFALSALV). Topologically, residues 273 to 282 (GEDGRLDMVH) are cytoplasmic. Residues 283–303 (IQNAALAGGVVVGTSSEMMLT) traverse the membrane as a helical segment. Position 304 (Pro304) is a topological domain, extracellular. Residues 305–325 (FGALAAGFLAGTVSTLGYKFF) form a helical membrane-spanning segment. Residues 326–346 (TPILESKFKVQDTCGVHNLHG) are Cytoplasmic-facing. Residues 347–367 (MPGVLGALLGVLVAGLATHEA) traverse the membrane as a helical segment. The Extracellular portion of the chain corresponds to 368 to 393 (YGDGLESVFPLIAEGQRSATSQAMLQ). The chain crosses the membrane as a helical span at residues 394 to 414 (LFGLFVTLMFASVGGGLGGLL). Residues 415–458 (LKLPFLDSPPDSQCYEDQVHWQVPGEHEDEAQRPLRVEEADTQA) lie on the Cytoplasmic side of the membrane. The interval 416–424 (KLPFLDSPP) is interaction with ANK3. Positions 429–432 (YEDQ) match the Basolateral sorting signal motif. A disordered region spans residues 439–458 (GEHEDEAQRPLRVEEADTQA). The segment covering 444 to 458 (EAQRPLRVEEADTQA) has biased composition (basic and acidic residues).

It belongs to the ammonium transporter (TC 2.A.49) family. Rh subfamily. Interacts (via C-terminus) with ANK2 and ANK3; required for targeting to the basolateral membrane. N-glycosylated.

Its subcellular location is the cell membrane. It localises to the basolateral cell membrane. The enzyme catalyses NH4(+)(in) = NH4(+)(out). The catalysed reaction is methylamine(out) = methylamine(in). It catalyses the reaction CO2(out) = CO2(in). Functionally, ammonium transporter involved in the maintenance of acid-base homeostasis. Transports ammonium and its related derivative methylammonium across the basolateral plasma membrane of epithelial cells likely contributing to renal transepithelial ammonia transport and ammonia metabolism. May transport either NH4(+) or NH3 ammonia species predominantly mediating an electrogenic NH4(+) transport. May act as a CO2 channel providing for renal acid secretion. The protein is Ammonium transporter Rh type B (RHBG) of Macaca mulatta (Rhesus macaque).